A 303-amino-acid chain; its full sequence is UDP-3-O-acyl-N-acetylglucosamine deacetylase (303 aa).

Zn(2+)-binding residues include His-78, His-237, and Asp-241. The Proton donor role is filled by His-264.

This sequence belongs to the LpxC family. It depends on Zn(2+) as a cofactor.

The enzyme catalyses a UDP-3-O-[(3R)-3-hydroxyacyl]-N-acetyl-alpha-D-glucosamine + H2O = a UDP-3-O-[(3R)-3-hydroxyacyl]-alpha-D-glucosamine + acetate. Its pathway is glycolipid biosynthesis; lipid IV(A) biosynthesis; lipid IV(A) from (3R)-3-hydroxytetradecanoyl-[acyl-carrier-protein] and UDP-N-acetyl-alpha-D-glucosamine: step 2/6. In terms of biological role, catalyzes the hydrolysis of UDP-3-O-myristoyl-N-acetylglucosamine to form UDP-3-O-myristoylglucosamine and acetate, the committed step in lipid A biosynthesis. This chain is UDP-3-O-acyl-N-acetylglucosamine deacetylase, found in Cellvibrio japonicus (strain Ueda107) (Pseudomonas fluorescens subsp. cellulosa).